A 266-amino-acid chain; its full sequence is Ribonuclease 3 (266 aa).

The RNase III domain maps to 34–158 (IERCQEILGY…VIAALYIDGG (125 aa)). Glu72 contributes to the Mg(2+) binding site. Asp76 is an active-site residue. Residues Asp144 and Glu147 each contribute to the Mg(2+) site. Glu147 is an active-site residue. Residues 185–254 (NHKSVLQQFA…AANALAELHN (70 aa)) enclose the DRBM domain.

Belongs to the ribonuclease III family. Homodimer. The cofactor is Mg(2+).

Its subcellular location is the cytoplasm. The catalysed reaction is Endonucleolytic cleavage to 5'-phosphomonoester.. Digests double-stranded RNA. Involved in the processing of primary rRNA transcript to yield the immediate precursors to the large and small rRNAs (23S and 16S). Processes some mRNAs, and tRNAs when they are encoded in the rRNA operon. Processes pre-crRNA and tracrRNA of type II CRISPR loci if present in the organism. In Rhodopirellula baltica (strain DSM 10527 / NCIMB 13988 / SH1), this protein is Ribonuclease 3.